We begin with the raw amino-acid sequence, 555 residues long: Glutamate--tRNA ligase (555 aa).

A 'HIGH' region motif is present at residues 103 to 113 (PNPSGPLHIGH).

The protein belongs to the class-I aminoacyl-tRNA synthetase family. Glutamate--tRNA ligase type 2 subfamily.

The protein localises to the cytoplasm. The enzyme catalyses tRNA(Glu) + L-glutamate + ATP = L-glutamyl-tRNA(Glu) + AMP + diphosphate. Catalyzes the attachment of glutamate to tRNA(Glu) in a two-step reaction: glutamate is first activated by ATP to form Glu-AMP and then transferred to the acceptor end of tRNA(Glu). In Methanobrevibacter smithii (strain ATCC 35061 / DSM 861 / OCM 144 / PS), this protein is Glutamate--tRNA ligase.